A 212-amino-acid chain; its full sequence is Uracil phosphoribosyltransferase (212 aa).

5-phospho-alpha-D-ribose 1-diphosphate-binding positions include Arg-78, Arg-103, and 130–138 (DPMLATGGS). Uracil contacts are provided by residues Ile-193 and 198 to 200 (GDA). Position 199 (Asp-199) interacts with 5-phospho-alpha-D-ribose 1-diphosphate.

It belongs to the UPRTase family. Requires Mg(2+) as cofactor.

It catalyses the reaction UMP + diphosphate = 5-phospho-alpha-D-ribose 1-diphosphate + uracil. Its pathway is pyrimidine metabolism; UMP biosynthesis via salvage pathway; UMP from uracil: step 1/1. Allosterically activated by GTP. Catalyzes the conversion of uracil and 5-phospho-alpha-D-ribose 1-diphosphate (PRPP) to UMP and diphosphate. The polypeptide is Uracil phosphoribosyltransferase (Pseudomonas putida (strain ATCC 700007 / DSM 6899 / JCM 31910 / BCRC 17059 / LMG 24140 / F1)).